Here is a 396-residue protein sequence, read N- to C-terminus: Purine ribonucleoside efflux pump NepI (396 aa).

Topologically, residues 1 to 21 (MSEFIAENRGADAITRPNWSA) are cytoplasmic. A helical transmembrane segment spans residues 22 to 42 (VFSVAFCVACLIIVEFLPVSL). At 43-54 (LTPMAQDLGISE) the chain is on the periplasmic side. Residues 55-75 (GVAGQSVTVTAFVAMFASLFI) traverse the membrane as a helical segment. Residues 76 to 85 (TQTIQATDRR) are Cytoplasmic-facing. Residues 86-106 (YVVILFAVLLTLSCLLVSFAN) traverse the membrane as a helical segment. Ser107 is a topological domain (periplasmic). A helical membrane pass occupies residues 108–128 (FSLLLIGRACLGLALGGFWAM). The Cytoplasmic portion of the chain corresponds to 129-147 (SASLTMRLVPPRTVPKALS). A helical transmembrane segment spans residues 148–168 (VIFGAVSIALVIAAPLGSFLG). Residues 169–175 (ELIGWRN) lie on the Periplasmic side of the membrane. Residues 176-196 (VFNAAAVMGVLCIFWIIKSLP) traverse the membrane as a helical segment. Residues 197 to 215 (SLPGEPSHQKQNTFRLLQR) are Cytoplasmic-facing. A helical membrane pass occupies residues 216 to 236 (PGVMAGMIAIFMSFAGQFAFF). Residues 237 to 255 (TYIRPVYMNLAGFGVDGLT) are Periplasmic-facing. A helical membrane pass occupies residues 256–276 (LVLLSFGIASFIGTSLSSFIL). Residues 277 to 281 (KRSVK) lie on the Cytoplasmic side of the membrane. Residues 282–302 (LALAGAPLILAVSALVLTLWG) traverse the membrane as a helical segment. Residues 303 to 305 (SDK) are Periplasmic-facing. A helical transmembrane segment spans residues 306-326 (IVATGVAIIWGLTFALVPVGW). The Cytoplasmic segment spans residues 327–343 (STWITRSLADQAEKAGS). A helical transmembrane segment spans residues 344–364 (IQVAVIQLANTCGAAIGGYAL). Topologically, residues 365 to 366 (DN) are periplasmic. A helical transmembrane segment spans residues 367–387 (IGLTSPLMLSGTLMLLTALLV). At 388-396 (TAKVKMKKS) the chain is on the cytoplasmic side.

It belongs to the major facilitator superfamily. DHA1 family. NepI (TC 2.A.1.2.26) subfamily.

The protein resides in the cell inner membrane. The catalysed reaction is inosine(in) + H(+)(out) = inosine(out) + H(+)(in). It catalyses the reaction guanosine(in) + H(+)(out) = guanosine(out) + H(+)(in). Its function is as follows. Involved in the efflux of purine ribonucleosides, such as inosine and guanosine. The protein is Purine ribonucleoside efflux pump NepI of Shigella flexneri.